Reading from the N-terminus, the 441-residue chain is Polycomb protein EED (441 aa).

The tract at residues 1-72 (MSEREVSTAP…PGRKSWGKGK (72 aa)) is disordered. Ser2 is modified (N-acetylserine). Phosphoserine is present on residues Ser2 and Ser34. The segment covering 45–61 (ESGTNTERPDTPTNTPN) has biased composition (polar residues). At Thr55 the chain carries Phosphothreonine. An N6,N6,N6-trimethyllysine; alternate modification is found at Lys66. Lys66 is modified (N6,N6-dimethyllysine; alternate). Lys66 carries the post-translational modification N6-methyllysine; alternate. The interval 81-441 (SFKCVNSLKE…ASIWRWDRLR (361 aa)) is interaction with EZH2. 4 WD repeats span residues 91 to 134 (DHNQ…EIRL), 142 to 185 (DADE…CIKH), 188 to 228 (GHGN…LVAI), and 234 to 275 (GHRD…NAIK). 2 required for interaction with the matrix protein MA of HIV-1 regions span residues 149 to 303 (TCAW…STRD) and 301 to 441 (TRDI…DRLR). 3 positions are modified to N6,N6,N6-trimethyllysine; alternate: Lys197, Lys268, and Lys284. An N6,N6-dimethyllysine; alternate mark is found at Lys197, Lys268, and Lys284. 3 positions are modified to N6-methyllysine; alternate: Lys197, Lys268, and Lys284. WD repeat units follow at residues 304–341 (IHRN…DDID), 359–399 (SQCD…PHKA), and 408–441 (KCGA…DRLR).

The protein belongs to the WD repeat ESC family. In terms of assembly, component of the PRC2/EED-EZH2 complex, which includes EED, EZH2, SUZ12, RBBP4 and RBBP7 and possibly AEBP2. The minimum components required for methyltransferase activity of the PRC2/EED-EZH2 complex are EED, EZH2 and SUZ12. Component of the PRC2/EED-EZH1 complex, which includes EED, EZH1, SUZ12, RBBP4 and AEBP2. The PRC2 complex may also interact with DNMT1, DNMT3A, DNMT3B and PHF1 via the EZH2 subunit and with SIRT1 via the SUZ12 subunit. Interacts with HDAC, HDAC2, histone H1 and YY1. May interact with ITGA4, ITGAE and ITGB7. Interacts with CDYL. Interacts with BMAL1. Interacts with KMT2A/MLL1. As to quaternary structure, (Microbial infection) May interact with the MA protein of HIV-1. In terms of processing, methylated. Binding to histone H1 'Lys-26' promotes mono-, di-, and trimethylation of internal lysines. In terms of tissue distribution, expressed in brain, colon, heart, kidney, liver, lung, muscle, ovary, peripheral blood leukocytes, pancreas, placenta, prostate, spleen, small intestine, testis, thymus and uterus. Appears to be overexpressed in breast and colon cancer.

The protein resides in the nucleus. Its subcellular location is the chromosome. Its function is as follows. Polycomb group (PcG) protein. Component of the PRC2/EED-EZH2 complex, which methylates 'Lys-9' and 'Lys-27' of histone H3, leading to transcriptional repression of the affected target gene. Also recognizes 'Lys-26' trimethylated histone H1 with the effect of inhibiting PRC2 complex methyltransferase activity on nucleosomal histone H3 'Lys-27', whereas H3 'Lys-27' recognition has the opposite effect, enabling the propagation of this repressive mark. The PRC2/EED-EZH2 complex may also serve as a recruiting platform for DNA methyltransferases, thereby linking two epigenetic repression systems. Genes repressed by the PRC2/EED-EZH2 complex include HOXC8, HOXA9, MYT1 and CDKN2A. The polypeptide is Polycomb protein EED (Homo sapiens (Human)).